The following is a 396-amino-acid chain: NADH-quinone oxidoreductase subunit D (396 aa).

Belongs to the complex I 49 kDa subunit family. As to quaternary structure, NDH-1 is composed of 14 different subunits. Subunits NuoB, C, D, E, F, and G constitute the peripheral sector of the complex.

It localises to the cell inner membrane. The enzyme catalyses a quinone + NADH + 5 H(+)(in) = a quinol + NAD(+) + 4 H(+)(out). NDH-1 shuttles electrons from NADH, via FMN and iron-sulfur (Fe-S) centers, to quinones in the respiratory chain. The immediate electron acceptor for the enzyme in this species is believed to be ubiquinone. Couples the redox reaction to proton translocation (for every two electrons transferred, four hydrogen ions are translocated across the cytoplasmic membrane), and thus conserves the redox energy in a proton gradient. This Bartonella bacilliformis (strain ATCC 35685 / KC583 / Herrer 020/F12,63) protein is NADH-quinone oxidoreductase subunit D.